Here is a 135-residue protein sequence, read N- to C-terminus: Fatty acid-binding protein 5 (135 aa).

Ala-2 is subject to N-acetylalanine. Position 3 is a phosphoserine (Ser-3). Positions 24–34 (KELGVGLALRK) match the Nuclear localization signal motif. Positions 43, 56, and 109 each coordinate 1-eicosanoylglycerol. A disulfide bridge links Cys-120 with Cys-127. 1-eicosanoylglycerol is bound at residue 129 to 131 (RVY). 129–131 (RVY) serves as a coordination point for (9Z,12Z)-octadecadienoate. Tyr-131 is a binding site for hexadecanoate. Tyr-131 provides a ligand contact to N-eicosanoyl ethanolamine. Tyr-131 is modified (phosphotyrosine).

Belongs to the calycin superfamily. Fatty-acid binding protein (FABP) family. In terms of assembly, monomer. Widely expressed.

The protein resides in the cytoplasm. The protein localises to the nucleus. It localises to the synapse. Its subcellular location is the postsynaptic density. It is found in the secreted. It catalyses the reaction hexadecanoate(out) = hexadecanoate(in). It carries out the reaction (9Z,12Z)-octadecadienoate(out) = (9Z,12Z)-octadecadienoate(in). The enzyme catalyses (9Z)-octadecenoate(out) = (9Z)-octadecenoate(in). Intracellular carrier for long-chain fatty acids and related active lipids, such as endocannabinoids, that regulate the metabolism and actions of the ligands they bind. In addition to the cytosolic transport, selectively delivers specific fatty acids from the cytosol to the nucleus, wherein they activate nuclear receptors. Delivers retinoic acid to the nuclear receptor peroxisome proliferator-activated receptor delta; which promotes proliferation and survival. May also serve as a synaptic carrier of endocannabinoid at central synapses and thus controls retrograde endocannabinoid signaling. Modulates inflammation by regulating PTGES induction via NF-kappa-B activation, and prostaglandin E2 (PGE2) biosynthesis during inflammation. May be involved in keratinocyte differentiation. This chain is Fatty acid-binding protein 5, found in Mus musculus (Mouse).